Here is a 271-residue protein sequence, read N- to C-terminus: Zinc finger protein 501 (271 aa).

9 consecutive C2H2-type zinc fingers follow at residues 22-44, 50-72, 78-100, 106-128, 134-156, 162-184, 190-212, 218-240, and 246-268; these read SKCS…QRIH, YVCS…LRIH, YKCN…LRIH, YKCN…QRIH, YKCA…QRSH, FKCN…QRIH, YTCT…ERTH, YKCS…YRIH, and YECF…QRLH.

It belongs to the krueppel C2H2-type zinc-finger protein family.

It is found in the nucleus. Its subcellular location is the nucleolus. In terms of biological role, may be involved in transcriptional regulation. Essential for Golgi structural integrity. This is Zinc finger protein 501 (ZNF501) from Pongo abelii (Sumatran orangutan).